Reading from the N-terminus, the 100-residue chain is Urease subunit gamma (100 aa).

It belongs to the urease gamma subunit family. In terms of assembly, heterotrimer of UreA (gamma), UreB (beta) and UreC (alpha) subunits. Three heterotrimers associate to form the active enzyme.

Its subcellular location is the cytoplasm. It carries out the reaction urea + 2 H2O + H(+) = hydrogencarbonate + 2 NH4(+). The protein operates within nitrogen metabolism; urea degradation; CO(2) and NH(3) from urea (urease route): step 1/1. This chain is Urease subunit gamma, found in Methylibium petroleiphilum (strain ATCC BAA-1232 / LMG 22953 / PM1).